The primary structure comprises 793 residues: Kinesin-like protein KIN-14C (793 aa).

Residues 1 to 43 (MASRNQNRPPRSPNAKKEGLGGISFDKRRKVETQGGTGRRQAF) form a disordered region. Positions 1–69 (MASRNQNRPP…IEECGKVDFT (69 aa)) are globular. Residues 15–32 (AKKEGLGGISFDKRRKVE) show a composition bias toward basic and acidic residues. A coiled-coil region spans residues 120 to 375 (KENLKVSLES…EQQLAIANER (256 aa)). The 342-residue stretch at 431-772 (NIRVFCRVRP…LRFAARVNAC (342 aa)) folds into the Kinesin motor domain. Position 516-523 (516-523 (GQTGSGKT)) interacts with ATP.

Belongs to the TRAFAC class myosin-kinesin ATPase superfamily. Kinesin family. KIN-14 subfamily.

It localises to the cytoplasm. The protein localises to the cytoskeleton. It is found in the spindle. Its subcellular location is the phragmoplast. The protein resides in the chromosome. It localises to the centromere. The protein localises to the kinetochore. In terms of biological role, kinesin that supports microtubule movement in an ATP-dependent manner and has a minus-end directed polarity. Plays a crucial role in spindle morphogenesis in male meiosis. In mitosis, is required for normal microtubule accumulation at the spindle poles during prophase and may play a role in spindle assembly during prometaphase. This Arabidopsis thaliana (Mouse-ear cress) protein is Kinesin-like protein KIN-14C.